The primary structure comprises 550 residues: Thermosome subunit (550 aa).

The interval 529 to 550 is disordered; that stretch reads KEKEGEKGGGGSEDFSSSSDLD. The segment covering 541 to 550 has biased composition (low complexity); it reads EDFSSSSDLD.

This sequence belongs to the TCP-1 chaperonin family. Forms an oligomeric complex of eight-membered rings.

Its function is as follows. Molecular chaperone; binds unfolded polypeptides in vitro, and has a weak ATPase activity. The polypeptide is Thermosome subunit (ths) (Pyrococcus abyssi (strain GE5 / Orsay)).